An 830-amino-acid chain; its full sequence is Venom phosphodiesterase (830 aa).

2 SMB domains span residues 7–50 (PLES…VLPT) and 51–95 (QSWS…RETS). Disulfide bonds link Cys11/Cys15, Cys11/Cys28, Cys15/Cys46, Cys26/Cys28, Cys26/Cys39, Cys32/Cys38, Cys39/Cys46, Cys55/Cys60, Cys55/Cys72, Cys60/Cys90, Cys70/Cys72, Cys70/Cys83, Cys76/Cys82, Cys83/Cys90, Cys101/Cys147, and Cys109/Cys321. Asn16 carries N-linked (GlcNAc...) asparagine glycosylation. Residues 35-37 (RKA) carry the Cell attachment site motif. A divalent metal cation contacts are provided by Asp124 and Thr162. The active-site AMP-threonine intermediate is the Thr162. N-linked (GlcNAc...) asparagine glycans are attached at residues Asn193, Asn236, and Asn247. Residue Lys248 coordinates AMP. Residues Asp282, His286, Asp329, and His330 each coordinate a divalent metal cation. His286 provides a ligand contact to AMP. Disulfide bonds link Cys337-Cys434, Cys385-Cys772, Cys518-Cys575, Cys531-Cys632, Cys533-Cys617, and Cys740-Cys750. His439 contributes to the a divalent metal cation binding site. An N-linked (GlcNAc...) asparagine glycan is attached at Asn489. Asn723 and Asn742 each carry an N-linked (GlcNAc...) asparagine glycan.

The protein belongs to the nucleotide pyrophosphatase/phosphodiesterase family. As to quaternary structure, monomer cleaved in two subunits; disulfide-linked. Is synthesized as a single-chain protein and is subsequently cleaved to form a two-subunit protein held together with disulfide bonds. It depends on a divalent metal cation as a cofactor. As to expression, expressed by venom gland.

The protein resides in the secreted. The catalysed reaction is ADP + H2O = AMP + phosphate + H(+). In terms of biological role, hydrolyzes ADP with high activity. Shows weak or no activity on 5'-AMP, 5'-GMP, 3'-AMP, ATP, cAMP, and cGMP. Is devoid of monophosphatase and proteinase activities. Dose-dependently inhibits platelet aggregation induced by ADP and collagen. The polypeptide is Venom phosphodiesterase (Naja atra (Chinese cobra)).